The sequence spans 278 residues: HTH-type transcriptional activator RhaS (278 aa).

One can recognise an HTH araC/xylS-type domain in the interval 174–272 (NQLMAWLEDH…NWSPRDIRQG (99 aa)). 2 DNA-binding regions (H-T-H motif) span residues 191–212 (EAVAEQFSLSLRTLHRQLKQHT) and 239–262 (VTEIAYRCGFGDSNHFSTLFRREF).

In terms of assembly, binds DNA as a dimer.

It localises to the cytoplasm. In terms of biological role, activates expression of the rhaBAD and rhaT operons. This is HTH-type transcriptional activator RhaS from Salmonella heidelberg (strain SL476).